The following is a 245-amino-acid chain: Probable transcriptional regulatory protein Aflv_0709 (245 aa).

Residues 1–14 are compositionally biased toward basic residues; it reads MAGHSKWKNIQRRK. The tract at residues 1 to 21 is disordered; sequence MAGHSKWKNIQRRKNAQDAKR.

Belongs to the TACO1 family.

The protein resides in the cytoplasm. In Anoxybacillus flavithermus (strain DSM 21510 / WK1), this protein is Probable transcriptional regulatory protein Aflv_0709.